Here is a 37-residue protein sequence, read N- to C-terminus: Potassium channel toxin alpha-KTx 2.14 (37 aa).

3 cysteine pairs are disulfide-bonded: cysteine 7–cysteine 28, cysteine 13–cysteine 33, and cysteine 17–cysteine 35.

Belongs to the short scorpion toxin superfamily. Potassium channel inhibitor family. Alpha-KTx 02 subfamily. As to expression, expressed by the venom gland.

It is found in the secreted. Reversibly blocks hKv1.1/KCNA1 (50% inhibition of current at 1 uM). Seems not to be voltage-dependent. This is Potassium channel toxin alpha-KTx 2.14 from Heteroctenus garridoi (Cuban scorpion).